The following is a 656-amino-acid chain: Protein sly1 homolog (656 aa).

Repeat copies occupy residues Asp85–Ala121, Arg203–Gln245, Leu419–Arg456, and Gln460–Thr496. Residues Asp85–Thr496 form a 4 X approximate repeats region.

Belongs to the STXBP/unc-18/SEC1 family.

It localises to the cytoplasm. The protein resides in the membrane. In terms of biological role, non-vital for development. The sequence is that of Protein sly1 homolog (Slh) from Drosophila virilis (Fruit fly).